Consider the following 247-residue polypeptide: Granulin (247 aa).

This sequence belongs to the polyhedrin family.

In terms of biological role, component of the virus occlusion bodies, which are large proteinaceous structures, that protect the virus from the outside environment for extended periods until they are ingested by insect larvae. This Agrotis segetum granulosis virus (AsGV) protein is Granulin.